The chain runs to 308 residues: tRNA dimethylallyltransferase (308 aa).

Residue 8–15 (GPTGTGKS) coordinates ATP. 10-15 (TGTGKS) lines the substrate pocket.

This sequence belongs to the IPP transferase family. Monomer. Mg(2+) is required as a cofactor.

It catalyses the reaction adenosine(37) in tRNA + dimethylallyl diphosphate = N(6)-dimethylallyladenosine(37) in tRNA + diphosphate. Catalyzes the transfer of a dimethylallyl group onto the adenine at position 37 in tRNAs that read codons beginning with uridine, leading to the formation of N6-(dimethylallyl)adenosine (i(6)A). The polypeptide is tRNA dimethylallyltransferase (Mycolicibacterium vanbaalenii (strain DSM 7251 / JCM 13017 / BCRC 16820 / KCTC 9966 / NRRL B-24157 / PYR-1) (Mycobacterium vanbaalenii)).